A 228-amino-acid chain; its full sequence is Death domain-containing membrane protein NRADD (228 aa).

Residues 1-52 lie on the Extracellular side of the membrane; it reads MLYNVSKGVVYSDTALQGQDGDREGMWVGAGGALAPNTSSLFPPEPPGASSN. N-linked (GlcNAc...) asparagine glycans are attached at residues asparagine 4 and asparagine 37. Residues 53–73 form a helical; Signal-anchor for type III membrane protein membrane-spanning segment; sequence IIPVYCALLATVILGLLAYVA. Residues 74–228 are Cytoplasmic-facing; that stretch reads FKCWRSHKQR…SSPAESSSVV (155 aa). The segment at 87-122 is disordered; the sequence is AKARTVELGDPDRDQRRGDSNVFVDSPPSLEPCIPS. Residues 90 to 105 are compositionally biased toward basic and acidic residues; sequence RTVELGDPDRDQRRGD. One can recognise a Death domain in the interval 143–222; sequence EEVQRLLMMG…DVVQVLSSPA (80 aa).

In terms of assembly, interacts with NGFR. Interacts with NTRK1. Interacts with SORT1. In terms of tissue distribution, detected in lung and testis.

The protein localises to the cell membrane. It localises to the nucleus. Modulates NTRK1 signaling. Can activate several intracellular signaling pathways, leading to activation of JUN. Promotes apoptosis. Promotes translocation of SORT1 to the cell membrane, and thereby hinders lysosomal degradation of SOTR1 and promotes its interaction with NGFR. This chain is Death domain-containing membrane protein NRADD (Nradd), found in Mus musculus (Mouse).